The following is a 150-amino-acid chain: MTTRTLRFYALVGFLVFLDQVTKYLAHAYLARDFIVIPNLFRLTLAKNSGAAFSFGTGFSWLFFLLGIIALIFIGWFLPRTTGSIVFLALLQGGIAGNVFDRLFKPPYFGNGEVVDFLNTPLLSGVVFNIADLFILAGVFGTFLFLKGSK.

A run of 3 helical transmembrane segments spans residues 8–28 (FYAL…LAHA), 58–78 (GFSW…GWFL), and 81–101 (TTGS…NVFD). Catalysis depends on residues D116 and D132. Residues 126–146 (VVFNIADLFILAGVFGTFLFL) form a helical membrane-spanning segment.

The protein belongs to the peptidase A8 family.

The protein localises to the cell membrane. The catalysed reaction is Release of signal peptides from bacterial membrane prolipoproteins. Hydrolyzes -Xaa-Yaa-Zaa-|-(S,diacylglyceryl)Cys-, in which Xaa is hydrophobic (preferably Leu), and Yaa (Ala or Ser) and Zaa (Gly or Ala) have small, neutral side chains.. It participates in protein modification; lipoprotein biosynthesis (signal peptide cleavage). This protein specifically catalyzes the removal of signal peptides from prolipoproteins. In Tropheryma whipplei (strain Twist) (Whipple's bacillus), this protein is Lipoprotein signal peptidase.